The following is a 256-amino-acid chain: Enkurin (256 aa).

The tract at residues 48–92 (TMGPAKLEVPSPKDFLKKHSKEKTLPPKKKFDRHEPKKPPVPLRT) is disordered. A compositionally biased stretch (basic and acidic residues) spans 61–72 (DFLKKHSKEKTL). The short motif at 83-89 (PKKPPVP) is the SH3-binding element. The Enkurin domain maps to 160–252 (KRNEEVKKAQ…VLEKHKIIYI (93 aa)). The 12-residue stretch at 176-187 (IQENLRKAAMKR) folds into the IQ domain.

As to quaternary structure, microtubule inner protein component of sperm flagellar doublet microtubules. Binds calmodulin via its IQ domain. Interacts with TRPC1, TRPC2, TRPC5, but not TRPC3. Interacts with CFAP45.

The protein resides in the cytoplasm. Its subcellular location is the cytoskeleton. The protein localises to the cilium axoneme. It localises to the flagellum axoneme. Adapter that functions to localize a calcium-sensitive signal transduction machinery in sperm to a calcium-permeable ion channel. Microtubule inner protein (MIP) part of the dynein-decorated doublet microtubules (DMTs) in cilia axoneme, which is required for motile cilia beating. The chain is Enkurin (ENKUR) from Sus scrofa (Pig).